Consider the following 915-residue polypeptide: Hexokinase HKDC1 (915 aa).

The tract at residues 1-20 is mitochondrial-binding peptide (MBP); the sequence is MFAVHLVAFYFTKLKEDQIK. Hexokinase domains follow at residues 16–458 and 464–903; these read EDQI…MVTA and QAQR…LITA. ATP is bound by residues Arg-30 and 84-89; that span reads DLGGSK. The segment at 73-207 is hexokinase small subdomain 1; it reads DGSENGEFLS…DLDVDILALV (135 aa). Position 84–91 (84–91) interacts with D-glucose 6-phosphate; it reads DLGGSKFR. D-glucose-binding positions include Ser-155, 172 to 173, and 208 to 209; these read TK and ND. A hexokinase large subdomain 1 region spans residues 208 to 447; that stretch reads NDTVGTMMTC…CDVRFLLSES (240 aa). 2 residues coordinate D-glucose 6-phosphate: Asp-209 and Thr-232. Residues Asn-235, Glu-260, and 291–294 each bind D-glucose; that span reads QLFE. 413 to 415 is a binding site for D-glucose 6-phosphate; it reads DGT. 425–426 contacts ATP; sequence KR. Residues Ser-449 and 532-536 each bind D-glucose 6-phosphate; that span reads DLGGT. Residues 521–652 are hexokinase small subdomain 2; sequence DGTEKGKFLA…EFDLDIVAIV (132 aa). ATP is bound at residue 532–537; that stretch reads DLGGTN. D-glucose-binding positions include 600 to 601, 617 to 618, and 653 to 654; these read SF, TK, and ND. Positions 653 to 892 are hexokinase large subdomain 2; the sequence is NDTVGTMMTC…CDVTFMLSED (240 aa). D-glucose 6-phosphate-binding residues include Asp-654 and Thr-677. Thr-677 serves as a coordination point for ATP. D-glucose-binding positions include 679 to 680, Glu-705, and Glu-739; that span reads SN. Residues 744–745, 781–785, and 860–864 contribute to the ATP site; these read GM, TKFLS, and TLYKL. Residues 858–860 and Ser-894 each bind D-glucose 6-phosphate; that span reads DGT.

It belongs to the hexokinase family. As to expression, widely expressed. Detected in retina, brain, cerebellum, liver, lung, kidney, spleen, pancreas and intestine.

It is found in the cytoplasm. The protein resides in the mitochondrion membrane. Its subcellular location is the photoreceptor inner segment. It carries out the reaction a D-hexose + ATP = a D-hexose 6-phosphate + ADP + H(+). It catalyses the reaction D-glucose + ATP = D-glucose 6-phosphate + ADP + H(+). The protein operates within carbohydrate metabolism; hexose metabolism. It participates in carbohydrate degradation; glycolysis; D-glyceraldehyde 3-phosphate and glycerone phosphate from D-glucose: step 1/4. Functionally, catalyzes the phosphorylation of hexose to hexose 6-phosphate, although at very low level compared to other hexokinases. Has low glucose phosphorylating activity compared to other hexokinases. Involved in glucose homeostasis and hepatic lipid accumulation. Required to maintain whole-body glucose homeostasis during pregnancy; however additional evidences are required to confirm this role. This chain is Hexokinase HKDC1, found in Mus musculus (Mouse).